The chain runs to 426 residues: Glutamate-1-semialdehyde 2,1-aminomutase (426 aa).

Lys265 is modified (N6-(pyridoxal phosphate)lysine).

The protein belongs to the class-III pyridoxal-phosphate-dependent aminotransferase family. HemL subfamily. In terms of assembly, homodimer. The cofactor is pyridoxal 5'-phosphate.

The protein resides in the cytoplasm. It carries out the reaction (S)-4-amino-5-oxopentanoate = 5-aminolevulinate. Its pathway is porphyrin-containing compound metabolism; protoporphyrin-IX biosynthesis; 5-aminolevulinate from L-glutamyl-tRNA(Glu): step 2/2. The chain is Glutamate-1-semialdehyde 2,1-aminomutase from Hydrogenovibrio crunogenus (strain DSM 25203 / XCL-2) (Thiomicrospira crunogena).